The primary structure comprises 586 residues: Heterogeneous nuclear ribonucleoprotein L (586 aa).

The span at 1 to 16 shows a compositional bias: basic residues; that stretch reads MSRRLLPRAEKRRRRL. The segment at 1 to 97 is disordered; sequence MSRRLLPRAE…NYDDPHKTPA (97 aa). Positions 17–27 are enriched in basic and acidic residues; it reads EQRQQPDEQLR. Over residues 28–37 the composition is skewed to low complexity; it reads RAGAMVKMAA. Residues 38–54 are compositionally biased toward gly residues; sequence AGGGGGGGRYYGGGNEG. Residues lysine 59 and lysine 62 each participate in a glycyl lysine isopeptide (Lys-Gly) (interchain with G-Cter in SUMO2) cross-link. A compositionally biased stretch (gly residues) spans 69 to 87; it reads QHGGGGGGGSGAAGGGGGE. Serine 98 bears the Phosphoserine mark. The RRM 1 domain maps to 99–173; that stretch reads PVVHIRGLID…HPAFVNYSTS (75 aa). Lysine 133 is covalently cross-linked (Glycyl lysine isopeptide (Lys-Gly) (interchain with G-Cter in SUMO2)). Serine 182 bears the Phosphoserine mark. The 78-residue stretch at 190–267 folds into the RRM 2 domain; that stretch reads SVLLFTILNP…CTLKIEYAKP (78 aa). Lysine 266 carries the post-translational modification N6-acetyllysine. A compositionally biased stretch (polar residues) spans 281–298; sequence DYTNPNLSGQGDPGSNPN. Positions 281–376 are disordered; it reads DYTNPNLSGQ…PPPPDYGPHA (96 aa). A phosphoserine mark is found at serine 288 and serine 295. Lysine 299 participates in a covalent cross-link: Glycyl lysine isopeptide (Lys-Gly) (interchain with G-Cter in SUMO2). 2 positions are modified to asymmetric dimethylarginine: arginine 351 and arginine 355. Over residues 361-372 the composition is skewed to pro residues; it reads GHPPPPPPPPDY. Serine 378 is subject to Phosphoserine. RRM domains lie at 379-476 and 492-580; these read PVLM…DFSE and RIQH…LCFS. Residue serine 541 is modified to Phosphoserine; by CaMK4. Lysine 565 participates in a covalent cross-link: Glycyl lysine isopeptide (Lys-Gly) (interchain with G-Cter in SUMO2).

Identified in a IGF2BP1-dependent mRNP granule complex containing untranslated mRNAs. Interacts with HNRNPLL. Interacts with APEX1; the interaction is DNA-dependent. Component of a complex with SETD2. Interacts with ELAVL1. Part of a transcription inhibitory ribonucleoprotein complex composed at least of the circular RNA circZNF827, ZNF827 and HNRNPK. Interacts with CHD8 in an RNA-dependent manner. Post-translationally, phosphorylation at Ser-541 by CaMK4 enhances interaction with a CaMK4-responsive RNA element (CaRRE1), and prevents inclusion of the stress axis-regulated exon (STREX) of the KCNMA1 potassium channel transcripts upon membrane depolarization. Detected in hematopoietic cells, including lymphoid progenitor cells.

The protein resides in the nucleus. The protein localises to the nucleoplasm. It is found in the cytoplasm. Splicing factor binding to exonic or intronic sites and acting as either an activator or repressor of exon inclusion. Exhibits a binding preference for CA-rich elements. Component of the heterogeneous nuclear ribonucleoprotein (hnRNP) complexes and associated with most nascent transcripts. Associates, together with APEX1, to the negative calcium responsive element (nCaRE) B2 of the APEX2 promoter. As part of a ribonucleoprotein complex composed at least of ZNF827, HNRNPK and the circular RNA circZNF827 that nucleates the complex on chromatin, may negatively regulate the transcription of genes involved in neuronal differentiation. Regulates alternative splicing of a core group of genes involved in neuronal differentiation, likely by mediating H3K36me3-coupled transcription elongation and co-transcriptional RNA processing via interaction with CHD8. This is Heterogeneous nuclear ribonucleoprotein L (Hnrnpl) from Mus musculus (Mouse).